Here is a 278-residue protein sequence, read N- to C-terminus: Small ribosomal subunit protein uS9m (278 aa).

A mitochondrion-targeting transit peptide spans 1–10; that stretch reads MFSRLSLFRR. The segment at 259–278 is disordered; the sequence is VERKKPGKKKARKMPTWVKR.

Belongs to the universal ribosomal protein uS9 family. In terms of assembly, component of the mitochondrial small ribosomal subunit (mt-SSU). Mature yeast 74S mitochondrial ribosomes consist of a small (37S) and a large (54S) subunit. The 37S small subunit contains a 15S ribosomal RNA (15S mt-rRNA) and 34 different proteins. The 54S large subunit contains a 21S rRNA (21S mt-rRNA) and 46 different proteins.

It localises to the mitochondrion. In terms of biological role, component of the mitochondrial ribosome (mitoribosome), a dedicated translation machinery responsible for the synthesis of mitochondrial genome-encoded proteins, including at least some of the essential transmembrane subunits of the mitochondrial respiratory chain. The mitoribosomes are attached to the mitochondrial inner membrane and translation products are cotranslationally integrated into the membrane. The polypeptide is Small ribosomal subunit protein uS9m (MRPS9) (Saccharomyces cerevisiae (strain ATCC 204508 / S288c) (Baker's yeast)).